A 265-amino-acid polypeptide reads, in one-letter code: Small ribosomal subunit protein eS1 (265 aa).

A disordered region spans residues 234–256 (EGSTTTSKGVTSEGGEKVDRVDG). Positions 247–256 (GGEKVDRVDG) are enriched in basic and acidic residues.

The protein belongs to the eukaryotic ribosomal protein eS1 family. As to quaternary structure, component of the small ribosomal subunit. Mature ribosomes consist of a small (40S) and a large (60S) subunit. The 40S subunit contains about 33 different proteins and 1 molecule of RNA (18S). The 60S subunit contains about 49 different proteins and 3 molecules of RNA (28S, 5.8S and 5S).

It localises to the cytoplasm. This Aplysia californica (California sea hare) protein is Small ribosomal subunit protein eS1.